We begin with the raw amino-acid sequence, 203 residues long: Thymidylate kinase (203 aa).

14 to 21 (GGEGIGKS) is an ATP binding site.

It belongs to the thymidylate kinase family.

It catalyses the reaction dTMP + ATP = dTDP + ADP. Functionally, phosphorylation of dTMP to form dTDP in both de novo and salvage pathways of dTTP synthesis. This Rickettsia rickettsii (strain Iowa) protein is Thymidylate kinase.